Here is a 345-residue protein sequence, read N- to C-terminus: Phosphoribosylformylglycinamidine cyclo-ligase (345 aa).

Belongs to the AIR synthase family.

The protein localises to the cytoplasm. It catalyses the reaction 2-formamido-N(1)-(5-O-phospho-beta-D-ribosyl)acetamidine + ATP = 5-amino-1-(5-phospho-beta-D-ribosyl)imidazole + ADP + phosphate + H(+). The protein operates within purine metabolism; IMP biosynthesis via de novo pathway; 5-amino-1-(5-phospho-D-ribosyl)imidazole from N(2)-formyl-N(1)-(5-phospho-D-ribosyl)glycinamide: step 2/2. The protein is Phosphoribosylformylglycinamidine cyclo-ligase of Shewanella loihica (strain ATCC BAA-1088 / PV-4).